An 886-amino-acid polypeptide reads, in one-letter code: Interference hedgehog (886 aa).

Residues 1–20 (MTLLTSSLLLFSLLTSRLEA) form the signal peptide. Residues 21–709 (IPVLEKSPAH…ETFNMSPMLT (689 aa)) lie on the Extracellular side of the membrane. The span at 29–38 (AHPAHSAHPA) shows a compositional bias: low complexity. Residues 29–52 (AHPAHSAHPAHPAHPAHPAHPSPG) are disordered. Ig-like C2-type domains are found at residues 51–148 (PGVR…IARL), 138–238 (PLVV…ERIQ), 258–346 (PHLL…YIKV), and 352–438 (PQIV…LQVN). Cystine bridges form between Cys74–Cys132, Cys179–Cys226, Cys282–Cys330, and Cys373–Cys420. 2 N-linked (GlcNAc...) asparagine glycosylation sites follow: Asn108 and Asn215. The disordered stretch occupies residues 432–475 (GTLLQVNPKQIQEPRESGGTHRPKPNQGSRQKQMYPPTPPNVTR). 2 consecutive Fibronectin type-III domains span residues 467–573 (PPTP…LQPG) and 581–676 (VPEL…TQRP). Asn472 carries N-linked (GlcNAc...) asparagine glycosylation. Residues Arg503, Lys507, Lys509, and Arg547 each coordinate heparin. Asn563 is a glycosylation site (N-linked (GlcNAc...) asparagine). Residues 668–697 (LKQGRTQRPKTSTTEEPTLQMGDRDTTTPS) are disordered. The span at 671-684 (GRTQRPKTSTTEEP) shows a compositional bias: polar residues. Asn699 is a glycosylation site (N-linked (GlcNAc...) asparagine). A helical membrane pass occupies residues 710–730 (GTIGGGAVLILLLISTCFCVC). The Cytoplasmic portion of the chain corresponds to 731 to 886 (RRRNSRSRGN…SSGSLNSVGV (156 aa)). Disordered regions lie at residues 734–768 (NSRS…QRQR) and 781–886 (QQQQ…SVGV). Composition is skewed to low complexity over residues 829–843 (RAGG…NNNN) and 870–886 (SSRS…SVGV).

The protein belongs to the immunoglobulin superfamily. IHOG family. In terms of assembly, homodimer. Heterotetramer; 2 iHog chains bind 2 hh chains when facilitated by heparin, heparin is required to promote high-affinity interactions between hh and iHog.

It is found in the membrane. Mediates response to the active Hedgehog (Hh) protein signal in embryos, functioning upstream or at the level of patched (ptc). The sequence is that of Interference hedgehog (ihog) from Drosophila melanogaster (Fruit fly).